The sequence spans 756 residues: Polyribonucleotide nucleotidyltransferase (756 aa).

2 residues coordinate Mg(2+): D527 and D533. The KH domain maps to 593 to 652 (PRITTIKVPVDKIGEVIGPKGKMINSITEETGASISIEDDGTVFVGASNGEAAQAAIDKI). The region spanning 664-733 (GERFLGTVVK…NRGKISLVLV (70 aa)) is the S1 motif domain.

This sequence belongs to the polyribonucleotide nucleotidyltransferase family. Mg(2+) serves as cofactor.

The protein resides in the cytoplasm. The catalysed reaction is RNA(n+1) + phosphate = RNA(n) + a ribonucleoside 5'-diphosphate. Involved in mRNA degradation. Catalyzes the phosphorolysis of single-stranded polyribonucleotides processively in the 3'- to 5'-direction. The protein is Polyribonucleotide nucleotidyltransferase of Mycolicibacterium gilvum (strain PYR-GCK) (Mycobacterium gilvum (strain PYR-GCK)).